A 321-amino-acid chain; its full sequence is Olfactory receptor 5K4 (321 aa).

Over 1–25 (MARENHSLAAEFILIGFTNYPELKT) the chain is Extracellular. N-linked (GlcNAc...) asparagine glycosylation occurs at asparagine 5. The helical transmembrane segment at 26–46 (LLFVVFSAIYLVTMVGNLGLV) threads the bilayer. The Cytoplasmic segment spans residues 47-54 (ALIYVERR). Residues 55–75 (LLTPMYIFLGNLALMDSCCSC) form a helical membrane-spanning segment. The Extracellular segment spans residues 76–97 (AVTPKMLENFFSEDRIISLYEC). An intrachain disulfide couples cysteine 97 to cysteine 179. Residues 98–118 (MAQFYFLCLAETTDCFLLATM) form a helical membrane-spanning segment. Over 119–139 (AYDRYVAICHPLQYHTMMSKT) the chain is Cytoplasmic. A helical transmembrane segment spans residues 140–160 (LCIRMTTGAFKAGNLHSMIHV). Residues 161–205 (GLLLRLTFCRSNKIHHFFCDILPLYRLSCTDPSINELMIYIFSIP) are Extracellular-facing. The chain crosses the membrane as a helical span at residues 206–226 (IQIFTIATVLISYLCILLTVF). The Cytoplasmic segment spans residues 227–240 (KMKSKEGRGKAFST). The helical transmembrane segment at 241-261 (CASHFLSVSIFYICLLMYIGP) threads the bilayer. The Extracellular segment spans residues 262–268 (SEEGDKD). A helical transmembrane segment spans residues 269–289 (TPVAIFYAIVIPLLNPFIYSL). The Cytoplasmic segment spans residues 290–321 (RNKEVINVLKKIMRNYNILKQTCSIANLFLIY).

It belongs to the G-protein coupled receptor 1 family.

Its subcellular location is the cell membrane. In terms of biological role, odorant receptor. The polypeptide is Olfactory receptor 5K4 (OR5K4) (Homo sapiens (Human)).